The primary structure comprises 327 residues: DNA-directed RNA polymerase subunit alpha (327 aa).

The interval 1 to 231 (MIYQMQMPAK…DHVTFFANFS (231 aa)) is alpha N-terminal domain (alpha-NTD). The tract at residues 252–327 (MRRLFHTKIE…GMDITKYQMK (76 aa)) is alpha C-terminal domain (alpha-CTD).

This sequence belongs to the RNA polymerase alpha chain family. Homodimer. The RNAP catalytic core consists of 2 alpha, 1 beta, 1 beta' and 1 omega subunit. When a sigma factor is associated with the core the holoenzyme is formed, which can initiate transcription.

The enzyme catalyses RNA(n) + a ribonucleoside 5'-triphosphate = RNA(n+1) + diphosphate. Its function is as follows. DNA-dependent RNA polymerase catalyzes the transcription of DNA into RNA using the four ribonucleoside triphosphates as substrates. The protein is DNA-directed RNA polymerase subunit alpha of Pelodictyon phaeoclathratiforme (strain DSM 5477 / BU-1).